The sequence spans 346 residues: Histone PARylation factor 1 (346 aa).

At Met-1 the chain carries N-acetylmethionine. Positions 1–10 are enriched in basic residues; sequence MVGGGAKRRL. The disordered stretch occupies residues 1–29; it reads MVGGGAKRRLRGEGPQCEKPVDMKKSKSC. Lys-19 is subject to N6-acetyllysine. Basic and acidic residues predominate over residues 19 to 29; sequence KPVDMKKSKSC. Ser-97 is subject to ADP-ribosylserine. Lys-186 and Lys-233 each carry N6-acetyllysine. PolyADP-ribosyl aspartic acid is present on Asp-235. Tyr-238 is subject to ADP-ribosyltyrosine. Position 240 is a polyADP-ribosyl glutamic acid (Glu-240). Residues 242-346 are interaction with PARP1; sequence PETDASLRRI…SQDDVDQLAA (105 aa). Glu-284 serves as the catalytic Proton donor.

This sequence belongs to the HPF1 family. As to quaternary structure, interacts with PARP1 (via the PARP catalytic domain). Interacts with PARP2 (via the PARP catalytic domain). Interacts with core nucleosomes in a PARP1- and PARP2-dependent manner.

Its subcellular location is the chromosome. It is found in the nucleus. Functionally, cofactor for serine ADP-ribosylation that confers serine specificity on PARP1 and PARP2 and plays a key role in DNA damage response. Initiates the repair of double-strand DNA breaks: recruited to DNA damage sites by PARP1 and PARP2 and switches the amino acid specificity of PARP1 and PARP2 from aspartate or glutamate to serine residues, licensing serine ADP-ribosylation of target proteins. Serine ADP-ribosylation of target proteins, such as histones, promotes decompaction of chromatin and the recruitment of repair factors leading to the reparation of DNA strand breaks. Serine ADP-ribosylation of proteins constitutes the primary form of ADP-ribosylation of proteins in response to DNA damage. HPF1 acts by completing the active site of PARP1 and PARP2: forms a composite active site composed of residues from HPF1 and PARP1 or PARP2. While HPF1 promotes the initiation of serine ADP-ribosylation, it restricts the polymerase activity of PARP1 and PARP2 in order to limit the length of poly-ADP-ribose chains. HPF1 also promotes tyrosine ADP-ribosylation, probably by conferring tyrosine specificity on PARP1. In Bos taurus (Bovine), this protein is Histone PARylation factor 1.